We begin with the raw amino-acid sequence, 329 residues long: Flotillin-like protein FloA (329 aa).

The next 2 helical transmembrane spans lie at 6 to 26 and 27 to 47; these read FIVI…FVPI and GLWI…LVGM.

The protein belongs to the flotillin-like FloA family. As to quaternary structure, homooligomerizes.

The protein localises to the cell membrane. Its subcellular location is the membrane raft. Its function is as follows. Found in functional membrane microdomains (FMM) that may be equivalent to eukaryotic membrane rafts. FMMs are highly dynamic and increase in number as cells age. Flotillins are thought to be important factors in membrane fluidity. The chain is Flotillin-like protein FloA from Staphylococcus aureus (strain JH1).